The primary structure comprises 856 residues: DNA mismatch repair protein MutS (856 aa).

Position 618 to 625 (618 to 625 (GPNMGGKS)) interacts with ATP.

Belongs to the DNA mismatch repair MutS family.

Functionally, this protein is involved in the repair of mismatches in DNA. It is possible that it carries out the mismatch recognition step. This protein has a weak ATPase activity. The protein is DNA mismatch repair protein MutS of Shewanella putrefaciens (strain CN-32 / ATCC BAA-453).